The primary structure comprises 144 residues: Heme transporter hrg1-B (144 aa).

A run of 4 helical transmembrane segments spans residues 6-26, 38-58, 71-91, and 107-127; these read IYIS…AFIV, AMGG…IMYI, FFMF…ATFI, and FYLS…LGLY. The Di-leucine motif signature appears at 140–141; it reads IL.

The protein belongs to the HRG family.

It is found in the endosome membrane. The protein localises to the lysosome membrane. Its subcellular location is the cytoplasmic vesicle. It localises to the phagosome membrane. It catalyses the reaction heme b(in) = heme b(out). Functionally, heme transporter that regulates intracellular heme availability through the endosomal or lysosomal compartment. In macrophages, is the heme transporter for heme-iron recycling. Essential for macrophage iron homeostasis, transports heme from the phagolysosome to the cytoplasm during erythrophagocytosis (EP). This chain is Heme transporter hrg1-B (slc48a1a), found in Danio rerio (Zebrafish).